Consider the following 873-residue polypeptide: Putative receptor-like protein kinase At5g39000 (873 aa).

The signal sequence occupies residues 1 to 21 (MIRHALLIFSILVSTPIVGEG). Residues 22–445 (ATSTYEPTDV…KNKSHILPIT (424 aa)) lie on the Extracellular side of the membrane. Residues N49, N64, N138, N168, N216, N266, N300, N340, and N437 are each glycosylated (N-linked (GlcNAc...) asparagine). Residues 446–466 (LAVVGSLVVLAMFVVGVLVIM) traverse the membrane as a helical segment. The Cytoplasmic portion of the chain corresponds to 467–873 (KKKKKSKPST…FSEINEPKAR (407 aa)). The tract at residues 472-494 (SKPSTNSSWCPLPHGTDSTNTKP) is disordered. The 286-residue stretch at 518 to 803 (FEDKLIIGVG…EFALQLHETA (286 aa)) folds into the Protein kinase domain. ATP-binding positions include 524–532 (IGVGGFGSV) and K547. Catalysis depends on D646, which acts as the Proton acceptor. The interval 813 to 843 (LDLMPSGEVGTTTDGEDDLFSRTTGHVGKST) is disordered. A compositionally biased stretch (polar residues) spans 833–843 (SRTTGHVGKST).

The protein belongs to the protein kinase superfamily. Ser/Thr protein kinase family.

It is found in the membrane. The protein is Putative receptor-like protein kinase At5g39000 of Arabidopsis thaliana (Mouse-ear cress).